The following is a 364-amino-acid chain: MITAEKKKKNKFLPNFDKQSIYSLRFDEMQNWLVEQGQQKFRAKQIFEWLYQKRVDSIDEMTNLSKDLRQLLKDNFTVTTLTTVVKQESKDGTIKFLFELQDGYTIETVLMRHDYGNSVCVTTQVGCRIGCTFCASTLGGLKRNLEAGEIVSQVLTVQKALDATEERVSQIVIMGIGEPFENYDEMMDFLRIVNDDNSLNIGARHITVSTSGIIPRIYDFADEDIQINFAVSLHAAKDEVRSRLMPINRAYNVEKLIEAIQYYQEKTNRRVTFEYGLFGGVNDQLEHARELAHLIKGLNCHVNLIPVNHVPERNYVKTAKNDIFKFEKELKRLGINATIRREQGSDIDAACGQLRAKERQVETR.

Residue Glu-107 is the Proton acceptor of the active site. One can recognise a Radical SAM core domain in the interval His-113 to Asp-346. Cys-120 and Cys-351 form a disulfide bridge. Residues Cys-127, Cys-131, and Cys-134 each coordinate [4Fe-4S] cluster. Residues Gly-177–Glu-178, Ser-209, Ser-232–His-234, and Asn-308 contribute to the S-adenosyl-L-methionine site. Residue Cys-351 is the S-methylcysteine intermediate of the active site.

It belongs to the radical SAM superfamily. RlmN family. The cofactor is [4Fe-4S] cluster.

The protein resides in the cytoplasm. It catalyses the reaction adenosine(2503) in 23S rRNA + 2 reduced [2Fe-2S]-[ferredoxin] + 2 S-adenosyl-L-methionine = 2-methyladenosine(2503) in 23S rRNA + 5'-deoxyadenosine + L-methionine + 2 oxidized [2Fe-2S]-[ferredoxin] + S-adenosyl-L-homocysteine. The enzyme catalyses adenosine(37) in tRNA + 2 reduced [2Fe-2S]-[ferredoxin] + 2 S-adenosyl-L-methionine = 2-methyladenosine(37) in tRNA + 5'-deoxyadenosine + L-methionine + 2 oxidized [2Fe-2S]-[ferredoxin] + S-adenosyl-L-homocysteine. Its function is as follows. Specifically methylates position 2 of adenine 2503 in 23S rRNA and position 2 of adenine 37 in tRNAs. Confers resistance to some classes of antibiotics. The chain is Probable dual-specificity RNA methyltransferase RlmN from Staphylococcus aureus (strain Mu3 / ATCC 700698).